We begin with the raw amino-acid sequence, 394 residues long: Flavohemoprotein (394 aa).

Positions 1–136 (MLSENTINIV…LANVFIQREE (136 aa)) constitute a Globin domain. Residue His-85 coordinates heme b. Active-site charge relay system residues include Tyr-95 and Glu-135. Residues 147 to 394 (GGWRGLREFE…YECFGPHKVV (248 aa)) are reductase. The FAD-binding FR-type domain maps to 150–255 (RGLREFELVE…AAPAGDFFLD (106 aa)). Residues Tyr-188 and 204-207 (RQYS) each bind FAD. 268 to 273 (GVGLTP) provides a ligand contact to NADP(+). Residue 387–390 (CFGP) participates in FAD binding.

It belongs to the globin family. Two-domain flavohemoproteins subfamily. The protein in the C-terminal section; belongs to the flavoprotein pyridine nucleotide cytochrome reductase family. Heme b serves as cofactor. The cofactor is FAD.

It catalyses the reaction 2 nitric oxide + NADPH + 2 O2 = 2 nitrate + NADP(+) + H(+). The catalysed reaction is 2 nitric oxide + NADH + 2 O2 = 2 nitrate + NAD(+) + H(+). In terms of biological role, is involved in NO detoxification in an aerobic process, termed nitric oxide dioxygenase (NOD) reaction that utilizes O(2) and NAD(P)H to convert NO to nitrate, which protects the bacterium from various noxious nitrogen compounds. Therefore, plays a central role in the inducible response to nitrosative stress. This Vibrio vulnificus (strain YJ016) protein is Flavohemoprotein.